A 135-amino-acid polypeptide reads, in one-letter code: Small ribosomal subunit protein uS12 (135 aa).

Aspartate 89 carries the 3-methylthioaspartic acid modification. Residues 108–135 (NKRTVSRSKYGTKKAKATDKKATDNKKK) form a disordered region. Over residues 111-122 (TVSRSKYGTKKA) the composition is skewed to basic residues. Positions 123–135 (KATDKKATDNKKK) are enriched in basic and acidic residues.

Belongs to the universal ribosomal protein uS12 family. As to quaternary structure, part of the 30S ribosomal subunit. Contacts proteins S8 and S17. May interact with IF1 in the 30S initiation complex.

Its function is as follows. With S4 and S5 plays an important role in translational accuracy. In terms of biological role, interacts with and stabilizes bases of the 16S rRNA that are involved in tRNA selection in the A site and with the mRNA backbone. Located at the interface of the 30S and 50S subunits, it traverses the body of the 30S subunit contacting proteins on the other side and probably holding the rRNA structure together. The combined cluster of proteins S8, S12 and S17 appears to hold together the shoulder and platform of the 30S subunit. This chain is Small ribosomal subunit protein uS12, found in Helicobacter pylori (strain P12).